We begin with the raw amino-acid sequence, 167 residues long: SsrA-binding protein (167 aa).

Residues Gln-139–Ala-167 form a disordered region. The span at Arg-144–Arg-158 shows a compositional bias: basic and acidic residues.

The protein belongs to the SmpB family.

It localises to the cytoplasm. Required for rescue of stalled ribosomes mediated by trans-translation. Binds to transfer-messenger RNA (tmRNA), required for stable association of tmRNA with ribosomes. tmRNA and SmpB together mimic tRNA shape, replacing the anticodon stem-loop with SmpB. tmRNA is encoded by the ssrA gene; the 2 termini fold to resemble tRNA(Ala) and it encodes a 'tag peptide', a short internal open reading frame. During trans-translation Ala-aminoacylated tmRNA acts like a tRNA, entering the A-site of stalled ribosomes, displacing the stalled mRNA. The ribosome then switches to translate the ORF on the tmRNA; the nascent peptide is terminated with the 'tag peptide' encoded by the tmRNA and targeted for degradation. The ribosome is freed to recommence translation, which seems to be the essential function of trans-translation. This is SsrA-binding protein from Xylella fastidiosa (strain M12).